The sequence spans 65 residues: MTKYSKGNKVEYHPIGGPSGTSTSTGVIQQVIKNDSGEETRYEILNDHTGKAATYKERNISRILD.

Positions 1-25 (MTKYSKGNKVEYHPIGGPSGTSTST) are disordered.

May play a role in primary metabolism. The sequence is that of Putative primary metabolism protein prl65 from Schizosaccharomyces pombe (strain 972 / ATCC 24843) (Fission yeast).